A 245-amino-acid polypeptide reads, in one-letter code: Tegument protein UL51 homolog (245 aa).

C10 carries the S-palmitoyl cysteine; by host lipid modification. The interval 225–245 (PVKSNLKSKHKPKRKASLVAV) is disordered. Residues 230 to 245 (LKSKHKPKRKASLVAV) show a composition bias toward basic residues.

Belongs to the herpesviridae UL51 family. As to quaternary structure, oligomerizes. Interacts with ORF55; this interaction mediates ORF55 incorporation to virions. Phosphorylated. Post-translationally, palmitoylation is necessary for Golgi localization.

The protein resides in the virion tegument. The protein localises to the host cytoplasm. It localises to the host Golgi apparatus. In terms of biological role, plays several roles during the time course of infection, including egress of virus particles from the perinuclear space and secondary envelopment of cytoplasmic capsids that bud into specific trans-Golgi network (TGN)-derived membranes. This is Tegument protein UL51 homolog from Equine herpesvirus 1 (strain Ab4p) (EHV-1).